Reading from the N-terminus, the 81-residue chain is Photosystem I iron-sulfur center (81 aa).

4Fe-4S ferredoxin-type domains are found at residues 2–31 and 37–68; these read SHSV…MVPW and GQIA…IRVY. Positions 11, 14, 17, 21, 48, 51, 54, and 58 each coordinate [4Fe-4S] cluster.

The cyanobacterial PSI reaction center is composed of one copy each of PsaA,B,C,D,E,F,I,J,K,L,M and X, and forms trimeric complexes. [4Fe-4S] cluster is required as a cofactor.

The protein resides in the cellular thylakoid membrane. The enzyme catalyses reduced [plastocyanin] + hnu + oxidized [2Fe-2S]-[ferredoxin] = oxidized [plastocyanin] + reduced [2Fe-2S]-[ferredoxin]. Functionally, apoprotein for the two 4Fe-4S centers FA and FB of photosystem I (PSI); essential for photochemical activity. FB is the terminal electron acceptor of PSI, donating electrons to ferredoxin. The C-terminus interacts with PsaA/B/D and helps assemble the protein into the PSI complex. Required for binding of PsaD and PsaE to PSI. PSI is a plastocyanin/cytochrome c6-ferredoxin oxidoreductase, converting photonic excitation into a charge separation, which transfers an electron from the donor P700 chlorophyll pair to the spectroscopically characterized acceptors A0, A1, FX, FA and FB in turn. Its function is as follows. Mutant proteins with a 3Fe-4S center are not observed bound to PSI in vitro, and are probably not able to do so in vivo. This chain is Photosystem I iron-sulfur center (psaC), found in Picosynechococcus sp. (strain ATCC 27264 / PCC 7002 / PR-6) (Agmenellum quadruplicatum).